A 340-amino-acid polypeptide reads, in one-letter code: Phosphate acyltransferase (340 aa).

The protein belongs to the PlsX family. In terms of assembly, homodimer. Probably interacts with PlsY.

The protein localises to the cytoplasm. It catalyses the reaction a fatty acyl-[ACP] + phosphate = an acyl phosphate + holo-[ACP]. The protein operates within lipid metabolism; phospholipid metabolism. In terms of biological role, catalyzes the reversible formation of acyl-phosphate (acyl-PO(4)) from acyl-[acyl-carrier-protein] (acyl-ACP). This enzyme utilizes acyl-ACP as fatty acyl donor, but not acyl-CoA. The chain is Phosphate acyltransferase from Nostoc punctiforme (strain ATCC 29133 / PCC 73102).